The sequence spans 185 residues: Potassium-transporting ATPase KdpC subunit (185 aa).

The helical transmembrane segment at 14–34 (ALSLLTGVAYPLALTGIAAVI) threads the bilayer.

Belongs to the KdpC family. In terms of assembly, the system is composed of three essential subunits: KdpA, KdpB and KdpC.

The protein resides in the cell inner membrane. Part of the high-affinity ATP-driven potassium transport (or Kdp) system, which catalyzes the hydrolysis of ATP coupled with the electrogenic transport of potassium into the cytoplasm. This subunit acts as a catalytic chaperone that increases the ATP-binding affinity of the ATP-hydrolyzing subunit KdpB by the formation of a transient KdpB/KdpC/ATP ternary complex. The chain is Potassium-transporting ATPase KdpC subunit from Cereibacter sphaeroides (strain KD131 / KCTC 12085) (Rhodobacter sphaeroides).